Reading from the N-terminus, the 360-residue chain is GTP 3',8-cyclase (360 aa).

The disordered stretch occupies residues 1-31; it reads MTVTALGVPTVRGRSEGSAVASDAPGDGPLL. Residues 33-251 form the Radical SAM core domain; that stretch reads RFGRSATDLR…LQPHFRLRPD (219 aa). Arginine 42 is a binding site for GTP. Residues cysteine 49 and cysteine 53 each contribute to the [4Fe-4S] cluster site. Residue tyrosine 55 coordinates S-adenosyl-L-methionine. [4Fe-4S] cluster is bound at residue cysteine 56. Position 93 (arginine 93) interacts with GTP. Glycine 97 contributes to the S-adenosyl-L-methionine binding site. Threonine 124 provides a ligand contact to GTP. Serine 148 is an S-adenosyl-L-methionine binding site. A GTP-binding site is contributed by lysine 185. Position 219 (methionine 219) interacts with S-adenosyl-L-methionine. 2 residues coordinate [4Fe-4S] cluster: cysteine 287 and cysteine 290. GTP is bound at residue 292–294; it reads RTR. Cysteine 304 lines the [4Fe-4S] cluster pocket.

Belongs to the radical SAM superfamily. MoaA family. In terms of assembly, monomer and homodimer. Requires [4Fe-4S] cluster as cofactor.

The enzyme catalyses GTP + AH2 + S-adenosyl-L-methionine = (8S)-3',8-cyclo-7,8-dihydroguanosine 5'-triphosphate + 5'-deoxyadenosine + L-methionine + A + H(+). Its pathway is cofactor biosynthesis; molybdopterin biosynthesis. Functionally, catalyzes the cyclization of GTP to (8S)-3',8-cyclo-7,8-dihydroguanosine 5'-triphosphate. The polypeptide is GTP 3',8-cyclase (Mycobacterium ulcerans (strain Agy99)).